We begin with the raw amino-acid sequence, 145 residues long: MRVVIQRATSAEVVVEGRTVGSLTTPGLVVLVGVTGTDTATTAEKLAEKVWGLRILSEEKSASDLNAPLLVVSQFTLYASTRKGRRPSWSAAAPGPVSEPLVDHFVTHLRSLGAHVETGIFGADMKVGLVNDGPMTILIDTDDWH.

Residues 133-134 carry the Gly-cisPro motif, important for rejection of L-amino acids motif; sequence GP.

Belongs to the DTD family. Homodimer.

The protein resides in the cytoplasm. It catalyses the reaction glycyl-tRNA(Ala) + H2O = tRNA(Ala) + glycine + H(+). The enzyme catalyses a D-aminoacyl-tRNA + H2O = a tRNA + a D-alpha-amino acid + H(+). Its function is as follows. An aminoacyl-tRNA editing enzyme that deacylates mischarged D-aminoacyl-tRNAs. Also deacylates mischarged glycyl-tRNA(Ala), protecting cells against glycine mischarging by AlaRS. Acts via tRNA-based rather than protein-based catalysis; rejects L-amino acids rather than detecting D-amino acids in the active site. By recycling D-aminoacyl-tRNA to D-amino acids and free tRNA molecules, this enzyme counteracts the toxicity associated with the formation of D-aminoacyl-tRNA entities in vivo and helps enforce protein L-homochirality. The polypeptide is D-aminoacyl-tRNA deacylase (Cutibacterium acnes (strain DSM 16379 / KPA171202) (Propionibacterium acnes)).